A 253-amino-acid chain; its full sequence is MASSAVSLQSISMTTLNNLSCNQQFHRSSLLGSSKSFQNLGISSNGSDFSYPSSFTAKKNLTASRALSQNGNIENPRPSKVQELSVYEINELDRHSPKILKNAFSLMFGLGDLVPFTNKLYTGDLKKRVGITAGLCVVIEHVPEKKGERFEATYSFYFGDYGHLSVQGPYLTYEDSFLAITGGAGIFEGAYGQVKLQQLVYPTKLFYTFYLKGLANDLPLELTGTPVPPSKDIEPAPEAKALEPSGVISNYTN.

Residues 1 to 77 (MASSAVSLQS…SQNGNIENPR (77 aa)) constitute a chloroplast transit peptide.

Belongs to the allene oxide cyclase family. As to expression, highly expressed in fully developed leaves.

The protein localises to the plastid. The protein resides in the chloroplast. The catalysed reaction is (9Z,13S,15Z)-12,13-epoxyoctadeca-9,11,15-trienoate = (9S,13S,15Z)-12-oxophyto-10,15-dienoate. Its function is as follows. Involved in the production of 12-oxo-phytodienoic acid (OPDA), a precursor of jasmonic acid. In Arabidopsis thaliana (Mouse-ear cress), this protein is Allene oxide cyclase 2, chloroplastic (AOC2).